The chain runs to 141 residues: Lutropin subunit beta (141 aa).

The signal sequence occupies residues methionine 1 to alanine 20. 6 disulfide bridges follow: cysteine 29/cysteine 77, cysteine 43/cysteine 92, cysteine 46/cysteine 130, cysteine 54/cysteine 108, cysteine 58/cysteine 110, and cysteine 113/cysteine 120. Residues asparagine 33 and asparagine 50 are each glycosylated (N-linked (GlcNAc...) asparagine).

Belongs to the glycoprotein hormones subunit beta family. In terms of assembly, heterodimer of a common alpha chain and a unique beta chain which confers biological specificity to thyrotropin, lutropin, follitropin and gonadotropin.

The protein localises to the secreted. Functionally, promotes spermatogenesis and ovulation by stimulating the testes and ovaries to synthesize steroids. The chain is Lutropin subunit beta (LHB) from Pongo pygmaeus (Bornean orangutan).